The chain runs to 417 residues: Serine hydroxymethyltransferase (417 aa).

(6S)-5,6,7,8-tetrahydrofolate-binding positions include leucine 121 and 125–127; that span reads GHL. An N6-(pyridoxal phosphate)lysine modification is found at lysine 229. 355–357 is a (6S)-5,6,7,8-tetrahydrofolate binding site; that stretch reads SPF.

It belongs to the SHMT family. Homodimer. It depends on pyridoxal 5'-phosphate as a cofactor.

The protein localises to the cytoplasm. The catalysed reaction is (6R)-5,10-methylene-5,6,7,8-tetrahydrofolate + glycine + H2O = (6S)-5,6,7,8-tetrahydrofolate + L-serine. Its pathway is one-carbon metabolism; tetrahydrofolate interconversion. It functions in the pathway amino-acid biosynthesis; glycine biosynthesis; glycine from L-serine: step 1/1. Functionally, catalyzes the reversible interconversion of serine and glycine with tetrahydrofolate (THF) serving as the one-carbon carrier. This reaction serves as the major source of one-carbon groups required for the biosynthesis of purines, thymidylate, methionine, and other important biomolecules. Also exhibits THF-independent aldolase activity toward beta-hydroxyamino acids, producing glycine and aldehydes, via a retro-aldol mechanism. The protein is Serine hydroxymethyltransferase of Edwardsiella ictaluri (strain 93-146).